A 292-amino-acid polypeptide reads, in one-letter code: ATP synthase gamma chain (292 aa).

Belongs to the ATPase gamma chain family. F-type ATPases have 2 components, CF(1) - the catalytic core - and CF(0) - the membrane proton channel. CF(1) has five subunits: alpha(3), beta(3), gamma(1), delta(1), epsilon(1). CF(0) has three main subunits: a, b and c.

It is found in the cell inner membrane. Produces ATP from ADP in the presence of a proton gradient across the membrane. The gamma chain is believed to be important in regulating ATPase activity and the flow of protons through the CF(0) complex. The polypeptide is ATP synthase gamma chain (Maridesulfovibrio salexigens (strain ATCC 14822 / DSM 2638 / NCIMB 8403 / VKM B-1763) (Desulfovibrio salexigens)).